Here is a 90-residue protein sequence, read N- to C-terminus: U7-theraphotoxin-Hhn1a 1 (90 aa).

A signal peptide spans M1 to S19. The propeptide occupies F20–E50. Cystine bridges form between C51/C65, C58/C70, and C64/C81.

It belongs to the neurotoxin 10 (Hwtx-1) family. 13 (Hntx-13) subfamily. In terms of tissue distribution, expressed by the venom gland.

It localises to the secreted. Its function is as follows. Ion channel inhibitor. The sequence is that of U7-theraphotoxin-Hhn1a 1 from Cyriopagopus hainanus (Chinese bird spider).